Here is a 387-residue protein sequence, read N- to C-terminus: Formate-dependent phosphoribosylglycinamide formyltransferase (387 aa).

N(1)-(5-phospho-beta-D-ribosyl)glycinamide-binding positions include 12–13 and glutamate 72; that span reads EL. ATP-binding positions include arginine 104, lysine 145, 150–155, 185–188, and glutamate 193; these read SSGKGQ and EEFI. Residues 109–300 form the ATP-grasp domain; it reads DLAAKDLKLL…EFELHIRAIL (192 aa). Positions 258 and 270 each coordinate Mg(2+). Residues aspartate 277, lysine 348, and 355–356 each bind N(1)-(5-phospho-beta-D-ribosyl)glycinamide; that span reads RR.

Belongs to the PurK/PurT family. In terms of assembly, homodimer.

The enzyme catalyses N(1)-(5-phospho-beta-D-ribosyl)glycinamide + formate + ATP = N(2)-formyl-N(1)-(5-phospho-beta-D-ribosyl)glycinamide + ADP + phosphate + H(+). The protein operates within purine metabolism; IMP biosynthesis via de novo pathway; N(2)-formyl-N(1)-(5-phospho-D-ribosyl)glycinamide from N(1)-(5-phospho-D-ribosyl)glycinamide (formate route): step 1/1. Involved in the de novo purine biosynthesis. Catalyzes the transfer of formate to 5-phospho-ribosyl-glycinamide (GAR), producing 5-phospho-ribosyl-N-formylglycinamide (FGAR). Formate is provided by PurU via hydrolysis of 10-formyl-tetrahydrofolate. This Leptospira borgpetersenii serovar Hardjo-bovis (strain JB197) protein is Formate-dependent phosphoribosylglycinamide formyltransferase.